Reading from the N-terminus, the 556-residue chain is Formate--tetrahydrofolate ligase (556 aa).

65-72 (TPAGEGKS) contacts ATP.

The protein belongs to the formate--tetrahydrofolate ligase family.

The enzyme catalyses (6S)-5,6,7,8-tetrahydrofolate + formate + ATP = (6R)-10-formyltetrahydrofolate + ADP + phosphate. The protein operates within one-carbon metabolism; tetrahydrofolate interconversion. The protein is Formate--tetrahydrofolate ligase of Streptococcus equi subsp. zooepidemicus (strain MGCS10565).